Reading from the N-terminus, the 147-residue chain is Large ribosomal subunit protein uL11 (147 aa).

Belongs to the universal ribosomal protein uL11 family. As to quaternary structure, part of the ribosomal stalk of the 50S ribosomal subunit. Interacts with L10 and the large rRNA to form the base of the stalk. L10 forms an elongated spine to which L12 dimers bind in a sequential fashion forming a multimeric L10(L12)X complex. One or more lysine residues are methylated.

Forms part of the ribosomal stalk which helps the ribosome interact with GTP-bound translation factors. The sequence is that of Large ribosomal subunit protein uL11 from Metamycoplasma arthritidis (strain 158L3-1) (Mycoplasma arthritidis).